Consider the following 151-residue polypeptide: MFSTGTLLLAALISPALAGPWAIICAGKSSNEIRTCDGHGCGQYTAQRNQKLHQGVDVLCSDGSTVYAPFTGKIMGQEKPYKNKNAINNGVRISGGGFCIKMFYIKPIKYKGSIKKGEKLGTLLPLQKVYPGIQSHIHIENCDLSDPTVYL.

Positions 1-18 are cleaved as a signal peptide; it reads MFSTGTLLLAALISPALA. Disulfide bonds link Cys-25–Cys-60, Cys-36–Cys-41, and Cys-99–Cys-142. Positions 53, 57, and 138 each coordinate Zn(2+).

It belongs to the LECT2/MIM-1 family.

The protein localises to the secreted. In terms of biological role, has a neutrophil chemotactic activity. Also a positive regulator of chondrocyte proliferation. The sequence is that of Leukocyte cell-derived chemotaxin-2 (LECT2) from Bos taurus (Bovine).